Consider the following 399-residue polypeptide: Elongation factor Tu (399 aa).

In terms of domain architecture, tr-type G spans 10–209; that stretch reads KPHVNIGTIG…EVDAYIPTPE (200 aa). Positions 19–26 are G1; sequence GHVDHGKT. Residue 19–26 coordinates GTP; sequence GHVDHGKT. T26 provides a ligand contact to Mg(2+). Residues 60 to 64 form a G2 region; it reads GITIA. The segment at 81–84 is G3; the sequence is DCPG. Residues 81–85 and 136–139 each bind GTP; these read DCPGH and NKQD. The segment at 136–139 is G4; that stretch reads NKQD. Positions 174–176 are G5; it reads SAL.

Belongs to the TRAFAC class translation factor GTPase superfamily. Classic translation factor GTPase family. EF-Tu/EF-1A subfamily. Monomer.

Its subcellular location is the cytoplasm. It carries out the reaction GTP + H2O = GDP + phosphate + H(+). Functionally, GTP hydrolase that promotes the GTP-dependent binding of aminoacyl-tRNA to the A-site of ribosomes during protein biosynthesis. This is Elongation factor Tu from Helicobacter pylori (strain Shi470).